Reading from the N-terminus, the 443-residue chain is Probable D-serine dehydratase (443 aa).

The residue at position 116 (Lys-116) is an N6-(pyridoxal phosphate)lysine.

Belongs to the serine/threonine dehydratase family. DsdA subfamily. The cofactor is pyridoxal 5'-phosphate.

It carries out the reaction D-serine = pyruvate + NH4(+). The protein is Probable D-serine dehydratase of Bacillus cereus (strain B4264).